Consider the following 213-residue polypeptide: Pyridoxine/pyridoxamine 5'-phosphate oxidase (213 aa).

Substrate contacts are provided by residues 10-13 (REEY) and lysine 68. FMN-binding positions include 63 to 68 (RMLLLK), 78 to 79 (FT), lysine 85, and glutamine 107. Substrate is bound by residues tyrosine 125, arginine 129, and serine 133. FMN-binding positions include 142–143 (QS) and tryptophan 186. 192–194 (RLH) contributes to the substrate binding site. Residue arginine 196 participates in FMN binding.

The protein belongs to the pyridoxamine 5'-phosphate oxidase family. As to quaternary structure, homodimer. FMN serves as cofactor.

It carries out the reaction pyridoxamine 5'-phosphate + O2 + H2O = pyridoxal 5'-phosphate + H2O2 + NH4(+). It catalyses the reaction pyridoxine 5'-phosphate + O2 = pyridoxal 5'-phosphate + H2O2. It participates in cofactor metabolism; pyridoxal 5'-phosphate salvage; pyridoxal 5'-phosphate from pyridoxamine 5'-phosphate: step 1/1. It functions in the pathway cofactor metabolism; pyridoxal 5'-phosphate salvage; pyridoxal 5'-phosphate from pyridoxine 5'-phosphate: step 1/1. Catalyzes the oxidation of either pyridoxine 5'-phosphate (PNP) or pyridoxamine 5'-phosphate (PMP) into pyridoxal 5'-phosphate (PLP). This is Pyridoxine/pyridoxamine 5'-phosphate oxidase from Nocardioides sp. (strain ATCC BAA-499 / JS614).